A 235-amino-acid chain; its full sequence is Ribosomal RNA small subunit methyltransferase G (235 aa).

S-adenosyl-L-methionine is bound by residues Gly-75, Phe-80, 126-127 (AE), and Arg-145.

This sequence belongs to the methyltransferase superfamily. RNA methyltransferase RsmG family.

The protein localises to the cytoplasm. Its function is as follows. Specifically methylates the N7 position of a guanine in 16S rRNA. In Carboxydothermus hydrogenoformans (strain ATCC BAA-161 / DSM 6008 / Z-2901), this protein is Ribosomal RNA small subunit methyltransferase G.